The following is a 179-amino-acid chain: Large ribosomal subunit protein uL6 (179 aa).

It belongs to the universal ribosomal protein uL6 family. As to quaternary structure, part of the 50S ribosomal subunit.

This protein binds to the 23S rRNA, and is important in its secondary structure. It is located near the subunit interface in the base of the L7/L12 stalk, and near the tRNA binding site of the peptidyltransferase center. This Acaryochloris marina (strain MBIC 11017) protein is Large ribosomal subunit protein uL6.